Reading from the N-terminus, the 740-residue chain is Polyribonucleotide nucleotidyltransferase (740 aa).

Mg(2+) is bound by residues Asp496 and Asp502. The KH domain occupies 563–622 (PAIIRTSIHPDKIRDIIGPGGKIIKKLVEETGADIDIEDDGRVFIAAVDREKGKRALEII). In terms of domain architecture, S1 motif spans 632–706 (GKLYNGKVTR…QQGRLKLSKK (75 aa)). The tract at residues 707–740 (EAMRDMGLAPAESTSEQPEKRERRPFSRPKATKE) is disordered. Over residues 723–740 (QPEKRERRPFSRPKATKE) the composition is skewed to basic and acidic residues.

This sequence belongs to the polyribonucleotide nucleotidyltransferase family. Requires Mg(2+) as cofactor.

The protein resides in the cytoplasm. The enzyme catalyses RNA(n+1) + phosphate = RNA(n) + a ribonucleoside 5'-diphosphate. Functionally, involved in mRNA degradation. Catalyzes the phosphorolysis of single-stranded polyribonucleotides processively in the 3'- to 5'-direction. This Desulforamulus reducens (strain ATCC BAA-1160 / DSM 100696 / MI-1) (Desulfotomaculum reducens) protein is Polyribonucleotide nucleotidyltransferase.